The primary structure comprises 241 residues: Phycocyanobilin:ferredoxin oxidoreductase (241 aa).

This sequence belongs to the HY2 family.

It carries out the reaction (2R,3Z)-phycocyanobilin + 4 oxidized [2Fe-2S]-[ferredoxin] = biliverdin IXalpha + 4 reduced [2Fe-2S]-[ferredoxin] + 4 H(+). Catalyzes the four-electron reduction of biliverdin IX-alpha (2-electron reduction at both the A and D rings); the reaction proceeds via an isolatable 2-electron intermediate, 181,182-dihydrobiliverdin. This Prochlorococcus marinus (strain MIT 9301) protein is Phycocyanobilin:ferredoxin oxidoreductase.